The primary structure comprises 199 residues: MKILQINASARSAGANSTRLADTVTARLLARNPNAVVELRDLASHPHPVLDEPALGALFTPADQRTAEQSARVALDDALIAQVQSVDAIVLGVPMYNFGVPVQLKTWIDAIARAGVTFHYTEKGPEGLLKGKKVYVALARGGLYRDTPADSQVPYLKSVLGFLGMTDVEFIYAEGLAMGAESASKAFAEAEAQIEELIA.

FMN is bound by residues serine 9 and 95-98; that span reads MYNF.

Belongs to the azoreductase type 1 family. In terms of assembly, homodimer. The cofactor is FMN.

It carries out the reaction 2 a quinone + NADH + H(+) = 2 a 1,4-benzosemiquinone + NAD(+). The enzyme catalyses N,N-dimethyl-1,4-phenylenediamine + anthranilate + 2 NAD(+) = 2-(4-dimethylaminophenyl)diazenylbenzoate + 2 NADH + 2 H(+). Quinone reductase that provides resistance to thiol-specific stress caused by electrophilic quinones. Functionally, also exhibits azoreductase activity. Catalyzes the reductive cleavage of the azo bond in aromatic azo compounds to the corresponding amines. In Dechloromonas aromatica (strain RCB), this protein is FMN-dependent NADH:quinone oxidoreductase.